The chain runs to 487 residues: Sodium-coupled neutral amino acid symporter 1 (487 aa).

Residues 1–74 lie on the Cytoplasmic side of the membrane; the sequence is MMHFKSGLEL…EYIPGTTSLG (74 aa). A Phosphoserine modification is found at S6. Position 11 is a phosphothreonine (T11). A phosphoserine mark is found at S25, S28, S49, and S52. T54 is modified (phosphothreonine). S56 carries the phosphoserine modification. The helical transmembrane segment at 75–97 threads the bilayer; sequence MSVFNLSNAIMGSGILGLAFALA. Topologically, residues 98–112 are extracellular; it reads NTGILLFLVLLTSVT. A helical membrane pass occupies residues 113–133; sequence LLSIYSINLLLICSKETGCMV. Residues 134 to 147 lie on the Cytoplasmic side of the membrane; it reads YEKLGEQVFGTTGK. Residues 148 to 168 traverse the membrane as a helical segment; the sequence is FVIFGATSLQNTGAMLSYLFI. Residues 169–188 are Extracellular-facing; it reads VKNELPSAIKFLMGKEETFS. The chain crosses the membrane as a helical span at residues 189–211; it reads AWYVDGRVLVVIVTFGIILPLCL. Residues 212 to 216 are Cytoplasmic-facing; it reads LKNLG. A helical membrane pass occupies residues 217–237; that stretch reads YLGYTSGFSLSCMVFFLIVVI. The Extracellular portion of the chain corresponds to 238–275; sequence YKKFQIPCIVPELNSTISANSTNADTCTPKYVTFNSKT. C245 and C264 form a disulfide bridge. Residues N251 and N257 are each glycosylated (N-linked (GlcNAc...) asparagine). A helical transmembrane segment spans residues 276-296; the sequence is VYALPTIAFAFVCHPSVLPIY. Topologically, residues 297-312 are cytoplasmic; sequence SELKDRSQKKMQMVSN. A helical transmembrane segment spans residues 313 to 333; that stretch reads ISFFAMFVMYFLTAIFGYLTF. Topologically, residues 334–350 are extracellular; sequence YDNVQSDLLHKYQSKDD. Residues 351 to 371 traverse the membrane as a helical segment; the sequence is ILILTVRLAVIVAVILTVPVL. Topologically, residues 372–393 are cytoplasmic; that stretch reads FFTVRSSLFELAKKTKFNLCRH. Residues 394 to 414 traverse the membrane as a helical segment; the sequence is TVVTCILLVVINLLVIFIPSM. At 415–416 the chain is on the extracellular side; the sequence is KD. Residues 417–437 form a helical membrane-spanning segment; the sequence is IFGVVGVTSANMLIFILPSSL. Residues 438-452 are Cytoplasmic-facing; the sequence is YLKITDQDGDKGTQR. A helical membrane pass occupies residues 453–473; sequence IWAALFLGLGVLFSLVSIPLV. Over 474–487 the chain is Extracellular; sequence IYDWACSSSSDEGH.

The protein belongs to the amino acid/polyamine transporter 2 family. In terms of processing, N-glycosylation plays an important role in the L-glutamine transport. In terms of tissue distribution, expressed in the cerebral cortex by pyramidal and GABAergic neurons, astrocytes and other non-neuronal cells (at protein level). Expressed in placenta, heart, lung, skeletal muscle, spleen, stomach and testis. Highly expressed in cytotrophoblast cells from term placenta.

It localises to the cell membrane. The catalysed reaction is L-glutamine(in) + Na(+)(in) = L-glutamine(out) + Na(+)(out). It carries out the reaction L-alanine(in) + Na(+)(in) = L-alanine(out) + Na(+)(out). The enzyme catalyses L-asparagine(in) + Na(+)(in) = L-asparagine(out) + Na(+)(out). It catalyses the reaction L-histidine(in) + Na(+)(in) = L-histidine(out) + Na(+)(out). The catalysed reaction is L-serine(in) + Na(+)(in) = L-serine(out) + Na(+)(out). It carries out the reaction L-cysteine(in) + Na(+)(in) = L-cysteine(out) + Na(+)(out). The enzyme catalyses L-methionine(in) + Na(+)(in) = L-methionine(out) + Na(+)(out). It catalyses the reaction glycine(in) + Na(+)(in) = glycine(out) + Na(+)(out). The catalysed reaction is L-threonine(in) + Na(+)(in) = L-threonine(out) + Na(+)(out). It carries out the reaction L-proline(in) + Na(+)(in) = L-proline(out) + Na(+)(out). With respect to regulation, inhibited by alpha-(methylamino)isobutyric acid (MeAIB). Inhibited by lithium, potassium, choline ions, N-methylglucamine. The pH dependence has an allosteric effect on the transport. In terms of biological role, symporter that cotransports short-chain neutral amino acids and sodium ions from the extraccellular to the intracellular side of the cell membrane. The transport is elctrogenic, pH dependent and driven by the Na(+) electrochemical gradient. Participates in the astroglia-derived glutamine transport into GABAergic interneurons for neurotransmitter GABA de novo synthesis. May also contributes to amino acid transport in placental trophoblasts. Also regulates synaptic plasticity. This chain is Sodium-coupled neutral amino acid symporter 1 (SLC38A1), found in Homo sapiens (Human).